The sequence spans 144 residues: Large ribosomal subunit protein uL16 (144 aa).

It belongs to the universal ribosomal protein uL16 family. As to quaternary structure, part of the 50S ribosomal subunit.

Its function is as follows. Binds 23S rRNA and is also seen to make contacts with the A and possibly P site tRNAs. In Porphyromonas gingivalis (strain ATCC 33277 / DSM 20709 / CIP 103683 / JCM 12257 / NCTC 11834 / 2561), this protein is Large ribosomal subunit protein uL16.